We begin with the raw amino-acid sequence, 225 residues long: Ribose-5-phosphate isomerase A (225 aa).

Residues 33–36, 86–89, and 99–102 contribute to the substrate site; these read TGST, DGAD, and KGGG. The active-site Proton acceptor is the E108. K126 serves as a coordination point for substrate.

The protein belongs to the ribose 5-phosphate isomerase family. Homodimer.

The catalysed reaction is aldehydo-D-ribose 5-phosphate = D-ribulose 5-phosphate. Its pathway is carbohydrate degradation; pentose phosphate pathway; D-ribose 5-phosphate from D-ribulose 5-phosphate (non-oxidative stage): step 1/1. Its function is as follows. Catalyzes the reversible conversion of ribose-5-phosphate to ribulose 5-phosphate. In Bordetella petrii (strain ATCC BAA-461 / DSM 12804 / CCUG 43448), this protein is Ribose-5-phosphate isomerase A.